We begin with the raw amino-acid sequence, 139 residues long: Protein LTO1 homolog (139 aa).

This sequence belongs to the LTO1 family.

The polypeptide is Protein LTO1 homolog (Dictyostelium discoideum (Social amoeba)).